Consider the following 320-residue polypeptide: UV DNA damage endonuclease (320 aa).

This sequence belongs to the uve1/UvsE family.

In terms of biological role, component in a DNA repair pathway. Removal of UV LIGHT damaged nucleotides. Recognizes pyrimidine dimers and cleave a phosphodiester bond immediately 5' to the lesion. In Bacillus pumilus (strain SAFR-032), this protein is UV DNA damage endonuclease.